The following is a 432-amino-acid chain: Glutamyl-tRNA reductase (432 aa).

Substrate-binding positions include 50-53, Ser110, 115-117, and Gln121; these read TCNR and ETQ. The active-site Nucleophile is Cys51. 190–195 is an NADP(+) binding site; it reads GVGEMS.

Belongs to the glutamyl-tRNA reductase family. Homodimer.

It carries out the reaction (S)-4-amino-5-oxopentanoate + tRNA(Glu) + NADP(+) = L-glutamyl-tRNA(Glu) + NADPH + H(+). It functions in the pathway porphyrin-containing compound metabolism; protoporphyrin-IX biosynthesis; 5-aminolevulinate from L-glutamyl-tRNA(Glu): step 1/2. In terms of biological role, catalyzes the NADPH-dependent reduction of glutamyl-tRNA(Glu) to glutamate 1-semialdehyde (GSA). The protein is Glutamyl-tRNA reductase of Sulfurimonas denitrificans (strain ATCC 33889 / DSM 1251) (Thiomicrospira denitrificans (strain ATCC 33889 / DSM 1251)).